Here is a 494-residue protein sequence, read N- to C-terminus: Trigger factor (494 aa).

The region spanning 169-254 (GDRITMDYVG…VKDVAAPGAV (86 aa)) is the PPIase FKBP-type domain. Residues 440–494 (LLAEDEGEAKAETKKAAPKKKAAAKSEAAEAGEGEEAAPKKKAAPKKKASEDSAE) form a disordered region.

Belongs to the FKBP-type PPIase family. Tig subfamily.

The protein localises to the cytoplasm. It catalyses the reaction [protein]-peptidylproline (omega=180) = [protein]-peptidylproline (omega=0). Its function is as follows. Involved in protein export. Acts as a chaperone by maintaining the newly synthesized protein in an open conformation. Functions as a peptidyl-prolyl cis-trans isomerase. In Rhizobium etli (strain ATCC 51251 / DSM 11541 / JCM 21823 / NBRC 15573 / CFN 42), this protein is Trigger factor.